The sequence spans 247 residues: ATP synthase subunit a, chloroplastic (247 aa).

A run of 5 helical transmembrane segments spans residues 38-58 (QVLI…IIAV), 95-115 (VPFI…GALL), 134-154 (INTT…AGLT), 199-219 (LVVV…VMFL), and 220-240 (GLFT…AYIG).

This sequence belongs to the ATPase A chain family. In terms of assembly, F-type ATPases have 2 components, CF(1) - the catalytic core - and CF(0) - the membrane proton channel. CF(1) has five subunits: alpha(3), beta(3), gamma(1), delta(1), epsilon(1). CF(0) has four main subunits: a, b, b' and c.

It localises to the plastid. Its subcellular location is the chloroplast thylakoid membrane. Its function is as follows. Key component of the proton channel; it plays a direct role in the translocation of protons across the membrane. This is ATP synthase subunit a, chloroplastic from Dioscorea elephantipes (Elephant's foot yam).